The chain runs to 656 residues: Phosphatidylinositol 4,5-bisphosphate-binding protein SLM2 (656 aa).

The PH domain occupies 445–555 (FEVKSGFLEK…WFGNIKALSS (111 aa)). Residues 577-605 (AKSNENTTESVTPQVTNEQHTRYDDVSSS) are disordered. The span at 580 to 594 (NENTTESVTPQVTNE) shows a compositional bias: polar residues. Phosphoserine is present on serine 626. Positions 640 to 645 (PEFYIE) match the PXIXIT-like, required for interaction with CNA1 and CNA2, and calcineurin-dependent dephosphorylation motif. Phosphoserine is present on residues serine 649 and serine 653.

As to quaternary structure, heterodimer of SLM1-SLM2. Binds phosphatidylinositol 4,5-bisphosphate, which is required for function. Interacts with the TORC2 subunits AVO2, BIT61 and TOR2. Interacts with the calcineurin catalytic subunits CNA1 and CNA2.

It is found in the cell membrane. In terms of biological role, together with SLM1, effector of the TORC2- and calcineurin-signaling pathways. Phosphorylated and activated by TORC2 under favorable growth conditions. Mediates actin polarization via inhibition of calcineurin-dependent transcription. Upon nutrient limitation or environmental stress, gets dephosphorylated by calcineurin, inhibiting interaction with TORC2, thereby antagonizing TORC2 signaling and mediating calcineurin-dependent actin depolarization. Also functions in heat-induced, calcineurin-mediated uracil permease (FUR4) endocytosis. This Saccharomyces cerevisiae (strain ATCC 204508 / S288c) (Baker's yeast) protein is Phosphatidylinositol 4,5-bisphosphate-binding protein SLM2 (SLM2).